The following is a 464-amino-acid chain: L-cystine uptake protein TcyP (464 aa).

10 helical membrane passes run 3–23 (TLLV…LYYM), 34–54 (VFTA…IYEP), 73–93 (YVKL…ISAF), 107–127 (GLII…GIAA), 184–204 (PTST…FIGV), 225–245 (IVMR…LALM), 263–283 (FVLA…LLIA), 347–367 (AGIY…IDPL), 371–391 (FILT…GVGG), and 395–415 (FAAL…ALVI).

This sequence belongs to the dicarboxylate/amino acid:cation symporter (DAACS) (TC 2.A.23) family.

It is found in the membrane. In terms of biological role, mediates uptake of L-cystine, the oxidized form of L-cysteine. This chain is L-cystine uptake protein TcyP, found in Bacillus cereus (strain ATCC 10987 / NRS 248).